The chain runs to 282 residues: Bis(5'-nucleosyl)-tetraphosphatase, symmetrical (282 aa).

It belongs to the Ap4A hydrolase family.

It carries out the reaction P(1),P(4)-bis(5'-adenosyl) tetraphosphate + H2O = 2 ADP + 2 H(+). Its function is as follows. Hydrolyzes diadenosine 5',5'''-P1,P4-tetraphosphate to yield ADP. The protein is Bis(5'-nucleosyl)-tetraphosphatase, symmetrical of Escherichia coli O81 (strain ED1a).